Here is a 388-residue protein sequence, read N- to C-terminus: Formate-dependent phosphoribosylglycinamide formyltransferase (388 aa).

N(1)-(5-phospho-beta-D-ribosyl)glycinamide contacts are provided by residues Glu20–Leu21 and Glu80. ATP-binding positions include Arg112, Lys153, Ser158–Gln163, Glu193–Val196, and Glu201. The region spanning Arg117–Leu306 is the ATP-grasp domain. Positions 265 and 277 each coordinate Mg(2+). N(1)-(5-phospho-beta-D-ribosyl)glycinamide contacts are provided by residues Asp284, Lys352, and Arg359 to Arg360.

This sequence belongs to the PurK/PurT family. Homodimer.

It catalyses the reaction N(1)-(5-phospho-beta-D-ribosyl)glycinamide + formate + ATP = N(2)-formyl-N(1)-(5-phospho-beta-D-ribosyl)glycinamide + ADP + phosphate + H(+). Its pathway is purine metabolism; IMP biosynthesis via de novo pathway; N(2)-formyl-N(1)-(5-phospho-D-ribosyl)glycinamide from N(1)-(5-phospho-D-ribosyl)glycinamide (formate route): step 1/1. Functionally, involved in the de novo purine biosynthesis. Catalyzes the transfer of formate to 5-phospho-ribosyl-glycinamide (GAR), producing 5-phospho-ribosyl-N-formylglycinamide (FGAR). Formate is provided by PurU via hydrolysis of 10-formyl-tetrahydrofolate. In Methanococcus vannielii (strain ATCC 35089 / DSM 1224 / JCM 13029 / OCM 148 / SB), this protein is Formate-dependent phosphoribosylglycinamide formyltransferase.